We begin with the raw amino-acid sequence, 299 residues long: Taste receptor type 2 member 19 (299 aa).

Position 1 (Met1) is a topological domain, extracellular. The helical transmembrane segment at 2–22 threads the bilayer; it reads MCFLLIILSILVVFAFVLGNF. At 23-55 the chain is on the cytoplasmic side; the sequence is SNGFIALVNVIDWVNTRKISSADQILTALVVSR. A helical membrane pass occupies residues 56–76; sequence IGLLWVMLFLWYATVFNSALY. Over 77–87 the chain is Extracellular; it reads GLEVRIVASNA. The chain crosses the membrane as a helical span at residues 88 to 108; the sequence is WAVMNHFSIWLAASLSIFCLL. Residues 109 to 127 lie on the Cytoplasmic side of the membrane; it reads KIANFSNLIFLHLKKRIKS. A helical transmembrane segment spans residues 128–148; the sequence is VVLVILLGPLVFLICNLAVIT. Residues 149–181 lie on the Extracellular side of the membrane; that stretch reads MDERVWTKEYEGNVTWKIKLRNAIQLSSLTVTT. Asn161 carries N-linked (GlcNAc...) asparagine glycosylation. The helical transmembrane segment at 182-202 threads the bilayer; that stretch reads LANLIPFTLSLICFLLLICSL. The Cytoplasmic segment spans residues 203–226; it reads CKHLKKMRLHSKGSQDPSTKVHIK. Residues 227–247 traverse the membrane as a helical segment; sequence ALQTVTSFLMLFAIYFLCIIT. Residues 248–259 lie on the Extracellular side of the membrane; it reads STWNLRTQQSKL. A helical membrane pass occupies residues 260 to 280; it reads VLLLCQTVAIMYPSFHSFILI. The Cytoplasmic segment spans residues 281–299; it reads MGSRKLKQTFLSVLWQMTR.

The protein belongs to the G-protein coupled receptor T2R family.

The protein localises to the membrane. Functionally, receptor that may play a role in the perception of bitterness and is gustducin-linked. May play a role in sensing the chemical composition of the gastrointestinal content. The activity of this receptor may stimulate alpha gustducin, mediate PLC-beta-2 activation and lead to the gating of TRPM5. The chain is Taste receptor type 2 member 19 (TAS2R19) from Pan paniscus (Pygmy chimpanzee).